Reading from the N-terminus, the 446-residue chain is Tubulin beta-1 chain (446 aa).

GTP is bound by residues Q11, E69, S138, G142, T143, G144, N204, and N226. Residue E69 participates in Mg(2+) binding. The interval 422 to 446 (YQQYQDATADEEGEYEDEEEGDLQD) is disordered. Acidic residues predominate over residues 429–446 (TADEEGEYEDEEEGDLQD).

It belongs to the tubulin family. As to quaternary structure, dimer of alpha and beta chains. A typical microtubule is a hollow water-filled tube with an outer diameter of 25 nm and an inner diameter of 15 nM. Alpha-beta heterodimers associate head-to-tail to form protofilaments running lengthwise along the microtubule wall with the beta-tubulin subunit facing the microtubule plus end conferring a structural polarity. Microtubules usually have 13 protofilaments but different protofilament numbers can be found in some organisms and specialized cells. Mg(2+) serves as cofactor. In terms of tissue distribution, found in areas of rapidly dividing tissues.

The protein resides in the cytoplasm. It localises to the cytoskeleton. Tubulin is the major constituent of microtubules, a cylinder consisting of laterally associated linear protofilaments composed of alpha- and beta-tubulin heterodimers. Microtubules grow by the addition of GTP-tubulin dimers to the microtubule end, where a stabilizing cap forms. Below the cap, tubulin dimers are in GDP-bound state, owing to GTPase activity of alpha-tubulin. This is Tubulin beta-1 chain (TUBB1) from Zea mays (Maize).